The chain runs to 351 residues: N-acetyl-gamma-glutamyl-phosphate reductase (351 aa).

Cys-154 is an active-site residue.

It belongs to the NAGSA dehydrogenase family. Type 1 subfamily.

It is found in the cytoplasm. It carries out the reaction N-acetyl-L-glutamate 5-semialdehyde + phosphate + NADP(+) = N-acetyl-L-glutamyl 5-phosphate + NADPH + H(+). The protein operates within amino-acid biosynthesis; L-arginine biosynthesis; N(2)-acetyl-L-ornithine from L-glutamate: step 3/4. Functionally, catalyzes the NADPH-dependent reduction of N-acetyl-5-glutamyl phosphate to yield N-acetyl-L-glutamate 5-semialdehyde. The chain is N-acetyl-gamma-glutamyl-phosphate reductase from Synechocystis sp. (strain ATCC 27184 / PCC 6803 / Kazusa).